The sequence spans 283 residues: MVSKILMYGLPSAAVAVGTALLNEDNRNTIFRKAFAFTQNHTPKSFDEHFPRGEWDKNWDFRDPTSLVDKSKWEKADEVGKKKLLEECKATASRNIFLIRHGQYHLDREQKHLTELGREQAELLGKRLANSDIKFTNMTMSTMTRATETANIILKHLPGDLPKSSSSLIEEGPPYPPVPDHKTWRPLDPEFYTEAARIESAFRKLIHRAPPSQKEDSYELIVCHANVIRYFICRALQFPPEGWLRMSLGNCSITWLVIRPKGHVSIRSVGDIGHLTPNKISFT.

Residues 7-23 traverse the membrane as a helical segment; that stretch reads MYGLPSAAVAVGTALLN.

The protein belongs to the phosphoglycerate mutase family. BPG-dependent PGAM subfamily. Interacts with skn-1.

It localises to the mitochondrion outer membrane. The enzyme catalyses O-phospho-L-seryl-[protein] + H2O = L-seryl-[protein] + phosphate. It catalyses the reaction O-phospho-L-threonyl-[protein] + H2O = L-threonyl-[protein] + phosphate. Displays phosphatase activity for serine/threonine residues. Has apparently no phosphoglycerate mutase activity. This chain is Serine/threonine-protein phosphatase Pgam5, mitochondrial (pgam-5), found in Caenorhabditis briggsae.